A 162-amino-acid polypeptide reads, in one-letter code: Ribosomal RNA large subunit methyltransferase H (162 aa).

S-adenosyl-L-methionine contacts are provided by residues L78, G109, and 128–133 (LSPLTL).

The protein belongs to the RNA methyltransferase RlmH family. Homodimer.

Its subcellular location is the cytoplasm. The enzyme catalyses pseudouridine(1915) in 23S rRNA + S-adenosyl-L-methionine = N(3)-methylpseudouridine(1915) in 23S rRNA + S-adenosyl-L-homocysteine + H(+). In terms of biological role, specifically methylates the pseudouridine at position 1915 (m3Psi1915) in 23S rRNA. The chain is Ribosomal RNA large subunit methyltransferase H from Psychrobacter sp. (strain PRwf-1).